The chain runs to 462 residues: MSKEYSTISKIYGPLMIVEGVKGVAYGEVVEIETESGEKRKGQVLDARENLAIVQVFEGTRDLDVKTTSVRFTGETLKVPVSMDMLGRIFNGIGKPIDGGPEIIPEDRRDVHGAPLNPVARAYPRDFIQTGISAIDGMNTLVRGQKLPIFSGSGLPHNQLAAQIARQAKVLGEEESFAVVFAAMGITYEEANFFKKSFEETGAIERAVLFLNLADDPAIERIITPRMALTVAEYLAFDYDMQVLVILTDMTNYCEALREISAAREEVPGRRGYPGYMYTDLATIYERAGRIRGKKGSITQMPILTMPDDDITHPIPDLTGYITEGQIVLSRELHRKGIYPPIDVLPSLSRLMKDGIGKGRTREDHPQLAQQLYAAYAEGRSLRDLVAVVGEEALSETDKKYLEFADRFEREFVAQGYYEDRSIEETLDLGWELLSILPESELKRVKKEMIMKYHPKYRKRSS.

Belongs to the ATPase alpha/beta chains family. In terms of assembly, has multiple subunits with at least A(3), B(3), C, D, E, F, H, I and proteolipid K(x).

It is found in the cell membrane. Component of the A-type ATP synthase that produces ATP from ADP in the presence of a proton gradient across the membrane. The B chain is a regulatory subunit. The sequence is that of A-type ATP synthase subunit B from Pyrococcus abyssi (strain GE5 / Orsay).